Here is a 470-residue protein sequence, read N- to C-terminus: Glutamate--tRNA ligase (470 aa).

The short motif at 12–22 is the 'HIGH' region element; it reads PSPTGIFHVGG. Residues Cys103, Cys105, Cys125, and Asp127 each coordinate Zn(2+). Residues 236–240 carry the 'KMSKS' region motif; the sequence is KLSKR. ATP is bound at residue Lys239.

The protein belongs to the class-I aminoacyl-tRNA synthetase family. Glutamate--tRNA ligase type 1 subfamily. In terms of assembly, monomer. The cofactor is Zn(2+).

It localises to the cytoplasm. It carries out the reaction tRNA(Glu) + L-glutamate + ATP = L-glutamyl-tRNA(Glu) + AMP + diphosphate. Catalyzes the attachment of glutamate to tRNA(Glu) in a two-step reaction: glutamate is first activated by ATP to form Glu-AMP and then transferred to the acceptor end of tRNA(Glu). This is Glutamate--tRNA ligase from Frankia alni (strain DSM 45986 / CECT 9034 / ACN14a).